The following is a 405-amino-acid chain: Phosphopentomutase (405 aa).

Residues Asp-10, Asp-305, His-310, Asp-346, His-347, and His-358 each contribute to the Mn(2+) site.

It belongs to the phosphopentomutase family. It depends on Mn(2+) as a cofactor.

Its subcellular location is the cytoplasm. It carries out the reaction 2-deoxy-alpha-D-ribose 1-phosphate = 2-deoxy-D-ribose 5-phosphate. It catalyses the reaction alpha-D-ribose 1-phosphate = D-ribose 5-phosphate. Its pathway is carbohydrate degradation; 2-deoxy-D-ribose 1-phosphate degradation; D-glyceraldehyde 3-phosphate and acetaldehyde from 2-deoxy-alpha-D-ribose 1-phosphate: step 1/2. Its function is as follows. Isomerase that catalyzes the conversion of deoxy-ribose 1-phosphate (dRib-1-P) and ribose 1-phosphate (Rib-1-P) to deoxy-ribose 5-phosphate (dRib-5-P) and ribose 5-phosphate (Rib-5-P), respectively. The sequence is that of Phosphopentomutase from Methylorubrum extorquens (strain CM4 / NCIMB 13688) (Methylobacterium extorquens).